Consider the following 253-residue polypeptide: Imidazole glycerol phosphate synthase subunit HisF (253 aa).

Residues aspartate 11 and aspartate 130 contribute to the active site.

It belongs to the HisA/HisF family. In terms of assembly, heterodimer of HisH and HisF.

Its subcellular location is the cytoplasm. It carries out the reaction 5-[(5-phospho-1-deoxy-D-ribulos-1-ylimino)methylamino]-1-(5-phospho-beta-D-ribosyl)imidazole-4-carboxamide + L-glutamine = D-erythro-1-(imidazol-4-yl)glycerol 3-phosphate + 5-amino-1-(5-phospho-beta-D-ribosyl)imidazole-4-carboxamide + L-glutamate + H(+). The protein operates within amino-acid biosynthesis; L-histidine biosynthesis; L-histidine from 5-phospho-alpha-D-ribose 1-diphosphate: step 5/9. Functionally, IGPS catalyzes the conversion of PRFAR and glutamine to IGP, AICAR and glutamate. The HisF subunit catalyzes the cyclization activity that produces IGP and AICAR from PRFAR using the ammonia provided by the HisH subunit. This chain is Imidazole glycerol phosphate synthase subunit HisF, found in Paracoccus denitrificans (strain Pd 1222).